The chain runs to 908 residues: Serine/threonine-protein kinase minibrain (908 aa).

Disordered stretches follow at residues 1 to 46 (MYRL…QRHA) and 119 to 143 (KKRR…LYND). Positions 121–139 (RRAQQTQGDDDSSNKKERK) match the Bipartite nuclear localization signal motif. Basic and acidic residues predominate over residues 132–141 (SSNKKERKLY). A Protein kinase domain is found at 164-484 (YEIDSLIGKG…PYYALQHNFF (321 aa)). ATP contacts are provided by residues 170-178 (IGKGSFGQV), lysine 193, and 243-246 (FELL). Catalysis depends on aspartate 292, which acts as the Proton acceptor. 3 disordered regions span residues 552–592 (AAGS…AGPG), 623–669 (NAHP…RHSR), and 863–895 (PAAQ…SSPM). Gly residues predominate over residues 556–566 (SGSGSSVGGGS). Residues 567–576 (SAAQQQQAMP) are compositionally biased toward low complexity. Positions 577–589 (LPLPLPLPLPPLA) are enriched in pro residues. The segment covering 623 to 654 (NAHPPPSLANSHHSTNSLGSLNHISPGSTGCH) has biased composition (polar residues). Low complexity-rich tracts occupy residues 655-664 (NNNSNSSNNN) and 868-893 (GISQ…SSSS).

This sequence belongs to the protein kinase superfamily. CMGC Ser/Thr protein kinase family. MNB/DYRK subfamily. In terms of tissue distribution, in ventral nerve cord and supraesophageal ganglion of embryos. Is most prominent in the mushroom body neuropil and the outer proliferation center of the optic lobes in third instar larvae.

It localises to the nucleus. The catalysed reaction is L-seryl-[protein] + ATP = O-phospho-L-seryl-[protein] + ADP + H(+). It carries out the reaction L-threonyl-[protein] + ATP = O-phospho-L-threonyl-[protein] + ADP + H(+). It catalyses the reaction L-tyrosyl-[protein] + ATP = O-phospho-L-tyrosyl-[protein] + ADP + H(+). In terms of biological role, role in the specific control of proper proliferation of optic lobe neuronal progeny. This is Serine/threonine-protein kinase minibrain (mnb) from Drosophila melanogaster (Fruit fly).